The following is a 505-amino-acid chain: Glycerol kinase (505 aa).

Position 12 (threonine 12) interacts with ADP. ATP-binding residues include threonine 12, threonine 13, and serine 14. Residue threonine 12 coordinates sn-glycerol 3-phosphate. Arginine 16 contributes to the ADP binding site. Residues arginine 82, glutamate 83, tyrosine 134, and aspartate 249 each contribute to the sn-glycerol 3-phosphate site. Residues arginine 82, glutamate 83, tyrosine 134, aspartate 249, and glutamine 250 each contribute to the glycerol site. ADP is bound by residues threonine 271 and glycine 315. Threonine 271, glycine 315, glutamine 319, and glycine 416 together coordinate ATP. Positions 416 and 420 each coordinate ADP.

It belongs to the FGGY kinase family.

The catalysed reaction is glycerol + ATP = sn-glycerol 3-phosphate + ADP + H(+). It participates in polyol metabolism; glycerol degradation via glycerol kinase pathway; sn-glycerol 3-phosphate from glycerol: step 1/1. Inhibited by fructose 1,6-bisphosphate (FBP). Key enzyme in the regulation of glycerol uptake and metabolism. Catalyzes the phosphorylation of glycerol to yield sn-glycerol 3-phosphate. The protein is Glycerol kinase of Mycolicibacterium vanbaalenii (strain DSM 7251 / JCM 13017 / BCRC 16820 / KCTC 9966 / NRRL B-24157 / PYR-1) (Mycobacterium vanbaalenii).